We begin with the raw amino-acid sequence, 263 residues long: Putative alpha/beta hydrolase L404 (263 aa).

Residue Gly-2 is the site of N-myristoyl glycine; by host attachment.

The protein belongs to the AB hydrolase superfamily.

In Acanthamoeba polyphaga (Amoeba), this protein is Putative alpha/beta hydrolase L404.